We begin with the raw amino-acid sequence, 1513 residues long: Protein tincar (1513 aa).

The Cytoplasmic portion of the chain corresponds to 1 to 77 (MGGKHQGSGA…DSGSYLHLNS (77 aa)). A helical transmembrane segment spans residues 78–98 (LWSIWYGVMLTLFQGYLAMHG). Residues 99 to 120 (AYRFLGCSLIPWKIEPVAELNL) lie on the Extracellular side of the membrane. The helical transmembrane segment at 121–141 (QIVLSGVVFILLPVFFTSAVF) threads the bilayer. Topologically, residues 142–181 (KVGNLANDGIKLATGARERRCTLSPHDGLEEESRGGTLRA) are cytoplasmic. The chain crosses the membrane as a helical span at residues 182 to 202 (LWTHGGPTAAFVHIVIALCLL). The Extracellular portion of the chain corresponds to 203-668 (LPRLLLEARI…VAIFSQPPSA (466 aa)). 3 disordered regions span residues 247–266 (TPFPRHHQPSNQQQSHHQHG), 354–373 (ERQELEEAIRGEEDDGDEGV), and 383–532 (MPDF…SIHR). Over residues 427–466 (ASSSSSSTTSTTTTTTTSTTTTAATTTSTRGTSTTTTTTT) the composition is skewed to low complexity. Residues 478–507 (SAHHHHGKSRKHHKHHNKQRQQQPPRRHHV) show a composition bias toward basic residues. The segment covering 523 to 532 (TTTRDSSIHR) has biased composition (basic and acidic residues). A helical transmembrane segment spans residues 669–689 (EFVNLLCALLVWSVRYPAVFW). Topologically, residues 690–696 (NTSKAFA) are cytoplasmic. A helical membrane pass occupies residues 697 to 717 (CVFSLQMVVAALDIILGYVGI). Over 718–736 (SNLYKLQIYAEAMPVHQPG) the chain is Extracellular. Residues 737–757 (LILNAVVTLALYLLSTALVLA) form a helical membrane-spanning segment. The Cytoplasmic portion of the chain corresponds to 758-787 (SSMVMYLYGHGRLATRMRDRSIITLKTHQT). The helical transmembrane segment at 788 to 808 (WIYFAHCASLCFVLALAVVKA) threads the bilayer. The Extracellular portion of the chain corresponds to 809–826 (PLLNDLSATYKNNLHCPT). Residues 827 to 847 (FLAALVGVTHLLLWIVIWLCL) form a helical membrane-spanning segment. Residues 848-1513 (TIKRRWHFKL…CGLYVTAQLH (666 aa)) are Cytoplasmic-facing. Composition is skewed to low complexity over residues 879–903 (SSGQRTGSNSSSSGCNSTSTTVNGG) and 1060–1071 (QQQQQQQQQQRQ). Disordered regions lie at residues 879 to 913 (SSGQRTGSNSSSSGCNSTSTTVNGGDSKPDMMSTA), 1045 to 1090 (EYDE…SGLG), 1115 to 1155 (ASTS…HSAG), 1173 to 1214 (EHHH…PHQH), and 1231 to 1335 (AHIA…DPAA). Residues 1122 to 1149 (PPQPSAQAPPPPPPLPIKGAPVPQPPAV) are compositionally biased toward pro residues. 2 stretches are compositionally biased toward low complexity: residues 1179–1208 (LQHSLQHPQHHPLQQQQQKQQTPQHPLQQQ) and 1255–1285 (TPRSDTTSTTESTNTTSPPERAPSESSSGVH). Positions 1286–1296 (SGEERELEVII) are enriched in basic and acidic residues. A compositionally biased stretch (pro residues) spans 1303-1314 (KPPPRPPQPPIQ). The segment covering 1324–1335 (MRMSSFNADPAA) has biased composition (polar residues).

Expression varies in tissues throughout development. At stage 5, expressed in the embryo dorsal region followed by expression in a striped pattern at stage 6. During gastrulation, expressed in ventral region and ventral nerve cord. Also detected in many neurons in the externa sensilla and chordotonal organ. At stage 16, expressed on the surface of the midgut. Additionally, expressed in a subset of cardioblasts (Tin+ subpopulation) during dorsal vessel formation. In third-instar larval tissues, expressed in the eye and antennal disks. In the antennal disks, expressed in the second antennal segments. In the eye disks, strongest expression found in the ocelli, and in the differentiating ommatidial cells. Also expressed in all cells within and in the vicinity of the morphogenetic furrow.

Its subcellular location is the membrane. In terms of biological role, involved in eye morphogenesis. May be essential for the normal differentiation of ommatidial cells. The protein is Protein tincar (tinc) of Drosophila melanogaster (Fruit fly).